The following is a 473-amino-acid chain: UDP-N-acetylmuramate--L-alanine ligase (473 aa).

Position 122 to 128 (122 to 128 (GTHGKTT)) interacts with ATP.

This sequence belongs to the MurCDEF family.

Its subcellular location is the cytoplasm. The catalysed reaction is UDP-N-acetyl-alpha-D-muramate + L-alanine + ATP = UDP-N-acetyl-alpha-D-muramoyl-L-alanine + ADP + phosphate + H(+). It participates in cell wall biogenesis; peptidoglycan biosynthesis. Functionally, cell wall formation. This chain is UDP-N-acetylmuramate--L-alanine ligase, found in Teredinibacter turnerae (strain ATCC 39867 / T7901).